The primary structure comprises 516 residues: D-alanine--D-alanyl carrier protein ligase (516 aa).

Residue 156-157 participates in ATP binding; it reads TS. D203 lines the D-alanine pocket. 298-303 is a binding site for ATP; the sequence is NAYGPT. Residue V307 coordinates D-alanine. ATP contacts are provided by residues D389, 401-404, and K503; that span reads YGGR. K503 serves as a coordination point for D-alanine.

The protein belongs to the ATP-dependent AMP-binding enzyme family. DltA subfamily.

The protein resides in the cytoplasm. It catalyses the reaction holo-[D-alanyl-carrier protein] + D-alanine + ATP = D-alanyl-[D-alanyl-carrier protein] + AMP + diphosphate. It participates in cell wall biogenesis; lipoteichoic acid biosynthesis. In terms of biological role, catalyzes the first step in the D-alanylation of lipoteichoic acid (LTA), the activation of D-alanine and its transfer onto the D-alanyl carrier protein (Dcp) DltC. In an ATP-dependent two-step reaction, forms a high energy D-alanyl-AMP intermediate, followed by transfer of the D-alanyl residue as a thiol ester to the phosphopantheinyl prosthetic group of the Dcp. D-alanylation of LTA plays an important role in modulating the properties of the cell wall in Gram-positive bacteria, influencing the net charge of the cell wall. The chain is D-alanine--D-alanyl carrier protein ligase from Streptococcus pneumoniae (strain 70585).